Reading from the N-terminus, the 196-residue chain is Orotate phosphoribosyltransferase (196 aa).

117–125 is a binding site for 5-phospho-alpha-D-ribose 1-diphosphate; that stretch reads EDVVTTGLS. Positions 121 and 149 each coordinate orotate.

Belongs to the purine/pyrimidine phosphoribosyltransferase family. PyrE subfamily. In terms of assembly, homodimer. Requires Mg(2+) as cofactor.

The catalysed reaction is orotidine 5'-phosphate + diphosphate = orotate + 5-phospho-alpha-D-ribose 1-diphosphate. It participates in pyrimidine metabolism; UMP biosynthesis via de novo pathway; UMP from orotate: step 1/2. Functionally, catalyzes the transfer of a ribosyl phosphate group from 5-phosphoribose 1-diphosphate to orotate, leading to the formation of orotidine monophosphate (OMP). This is Orotate phosphoribosyltransferase from Sphingopyxis alaskensis (strain DSM 13593 / LMG 18877 / RB2256) (Sphingomonas alaskensis).